We begin with the raw amino-acid sequence, 333 residues long: Ketol-acid reductoisomerase (NADP(+)) (333 aa).

Positions 2-182 (AKMYYDSDAS…GCTRAGVLET (181 aa)) constitute a KARI N-terminal Rossmann domain. Residues 25 to 28 (YGSQ), R48, S51, and 83 to 86 (DERQ) each bind NADP(+). Residue H108 is part of the active site. G134 contributes to the NADP(+) binding site. A KARI C-terminal knotted domain is found at 183-328 (TFKEETETDL…AELRAMMPFI (146 aa)). 4 residues coordinate Mg(2+): D191, E195, E227, and E231. A substrate-binding site is contributed by S252.

The protein belongs to the ketol-acid reductoisomerase family. Requires Mg(2+) as cofactor.

The enzyme catalyses (2R)-2,3-dihydroxy-3-methylbutanoate + NADP(+) = (2S)-2-acetolactate + NADPH + H(+). It catalyses the reaction (2R,3R)-2,3-dihydroxy-3-methylpentanoate + NADP(+) = (S)-2-ethyl-2-hydroxy-3-oxobutanoate + NADPH + H(+). Its pathway is amino-acid biosynthesis; L-isoleucine biosynthesis; L-isoleucine from 2-oxobutanoate: step 2/4. It functions in the pathway amino-acid biosynthesis; L-valine biosynthesis; L-valine from pyruvate: step 2/4. Functionally, involved in the biosynthesis of branched-chain amino acids (BCAA). Catalyzes an alkyl-migration followed by a ketol-acid reduction of (S)-2-acetolactate (S2AL) to yield (R)-2,3-dihydroxy-isovalerate. In the isomerase reaction, S2AL is rearranged via a Mg-dependent methyl migration to produce 3-hydroxy-3-methyl-2-ketobutyrate (HMKB). In the reductase reaction, this 2-ketoacid undergoes a metal-dependent reduction by NADPH to yield (R)-2,3-dihydroxy-isovalerate. This is Ketol-acid reductoisomerase (NADP(+)) from Desulfitobacterium hafniense (strain DSM 10664 / DCB-2).